Here is a 160-residue protein sequence, read N- to C-terminus: Keratin-associated protein 13-4 (160 aa).

4 repeat units span residues 41-50, 51-60, 61-70, and 77-86. A 4 X 10 AA approximate repeats region spans residues 41 to 86; that stretch reads CQLRSSLYRDCQKTCWEPASCQKSCYRPRTSILCCPCQTTCSGSLG.

The protein belongs to the PMG family. Interacts with hair keratins.

In the hair cortex, hair keratin intermediate filaments are embedded in an interfilamentous matrix, consisting of hair keratin-associated proteins (KRTAP), which are essential for the formation of a rigid and resistant hair shaft through their extensive disulfide bond cross-linking with abundant cysteine residues of hair keratins. The matrix proteins include the high-sulfur and high-glycine-tyrosine keratins. The protein is Keratin-associated protein 13-4 (KRTAP13-4) of Homo sapiens (Human).